A 141-amino-acid chain; its full sequence is Small ribosomal subunit protein bS6 (141 aa).

The segment at 97–141 (TGQSEMLKAEENRSERRERRDRPEHADSADGDDSDNSDASDNADE) is disordered. A compositionally biased stretch (basic and acidic residues) spans 103-124 (LKAEENRSERRERRDRPEHADS). Residues 125–141 (ADGDDSDNSDASDNADE) show a composition bias toward acidic residues.

This sequence belongs to the bacterial ribosomal protein bS6 family.

Binds together with bS18 to 16S ribosomal RNA. The sequence is that of Small ribosomal subunit protein bS6 from Pseudomonas fluorescens (strain ATCC BAA-477 / NRRL B-23932 / Pf-5).